The following is a 226-amino-acid chain: Putative methyltransferase RP459 (226 aa).

Belongs to the methyltransferase superfamily.

This chain is Putative methyltransferase RP459, found in Rickettsia prowazekii (strain Madrid E).